We begin with the raw amino-acid sequence, 318 residues long: NADH-ubiquinone oxidoreductase chain 1 (318 aa).

8 helical membrane passes run 2–22, 70–90, 100–120, 147–167, 171–191, 217–237, 254–276, and 294–314; these read FMINVLLLIIPILLAVAFLTL, MFIIAPILALTLALTMWIPLP, LGILFMLAMSSLAVYSILWSG, AIILLSVLLMSGSFTLSTLII, YLWLIFPSWPLAMMWFISTLA, AGPFALFFLAEYANIIMMNIF, LYSINFTMKTLLLTCSFLWIRAS, and LPLTLALCMWHVSLPIMLSSI.

This sequence belongs to the complex I subunit 1 family. As to quaternary structure, core subunit of respiratory chain NADH dehydrogenase (Complex I) which is composed of 45 different subunits.

It localises to the mitochondrion inner membrane. It carries out the reaction a ubiquinone + NADH + 5 H(+)(in) = a ubiquinol + NAD(+) + 4 H(+)(out). In terms of biological role, core subunit of the mitochondrial membrane respiratory chain NADH dehydrogenase (Complex I) which catalyzes electron transfer from NADH through the respiratory chain, using ubiquinone as an electron acceptor. Essential for the catalytic activity and assembly of complex I. This Equus asinus (Donkey) protein is NADH-ubiquinone oxidoreductase chain 1 (MT-ND1).